The sequence spans 426 residues: Glutamate-1-semialdehyde 2,1-aminomutase (426 aa).

N6-(pyridoxal phosphate)lysine is present on K265.

The protein belongs to the class-III pyridoxal-phosphate-dependent aminotransferase family. HemL subfamily. Homodimer. Pyridoxal 5'-phosphate serves as cofactor.

The protein localises to the cytoplasm. It catalyses the reaction (S)-4-amino-5-oxopentanoate = 5-aminolevulinate. It participates in porphyrin-containing compound metabolism; protoporphyrin-IX biosynthesis; 5-aminolevulinate from L-glutamyl-tRNA(Glu): step 2/2. The protein is Glutamate-1-semialdehyde 2,1-aminomutase of Aliarcobacter butzleri (strain RM4018) (Arcobacter butzleri).